The sequence spans 767 residues: Polyketide biosynthesis protein PksE (767 aa).

Residues 1-312 form an acyl transferase region; that stretch reads MITYVFPGQG…QRNVQAGITA (312 aa). Catalysis depends on residues serine 87 and histidine 193.

This sequence in the N-terminal section; belongs to the FabD family.

It localises to the cytoplasm. It carries out the reaction holo-[ACP] + malonyl-CoA = malonyl-[ACP] + CoA. The protein operates within antibiotic biosynthesis; bacillaene biosynthesis. Probably involved in some intermediate steps for the synthesis of the antibiotic polyketide bacillaene which is involved in secondary metabolism. Probably has an acyl transferase activity and could also have a flavin mononucleotide-dependent oxidoreductase activity. The polypeptide is Polyketide biosynthesis protein PksE (pksE) (Bacillus subtilis (strain 168)).